The sequence spans 406 residues: GTPase Obg (406 aa).

In terms of domain architecture, Obg spans 1 to 159 (MRFVDEAVIT…REIRLELKVL (159 aa)). The interval 120 to 143 (GGEGGLGNTHFKSSTNRAPRKCTT) is disordered. The OBG-type G domain maps to 160–333 (ADVGLLGMPN…VVYYLMDQIE (174 aa)). Residues 166 to 173 (GMPNAGKS), 191 to 195 (FTTMV), 213 to 216 (DIPG), 283 to 286 (NKLD), and 314 to 316 (SGL) contribute to the GTP site. The Mg(2+) site is built by serine 173 and threonine 193. Positions 381–406 (ESMMDDDDDFDDDEDDGDVESIYVRD) are disordered. A compositionally biased stretch (acidic residues) spans 383 to 399 (MMDDDDDFDDDEDDGDV).

Belongs to the TRAFAC class OBG-HflX-like GTPase superfamily. OBG GTPase family. In terms of assembly, monomer. The cofactor is Mg(2+).

It is found in the cytoplasm. Functionally, an essential GTPase which binds GTP, GDP and possibly (p)ppGpp with moderate affinity, with high nucleotide exchange rates and a fairly low GTP hydrolysis rate. Plays a role in control of the cell cycle, stress response, ribosome biogenesis and in those bacteria that undergo differentiation, in morphogenesis control. The polypeptide is GTPase Obg (Acinetobacter baumannii (strain SDF)).